Consider the following 355-residue polypeptide: MEDLEETLFEEFENYSYALDYYSLESDLEEKVQLGVVHWVSLVLYCLSFVLGIPGNAIVIWFTGFKWKRTVSTLWFLNLAIADFIFLLFLPLYISYVVMNFHWPFGIWLCKANSFTAQLNMFASVFFLTVISLDHYIHLIHPVLSHRHRTLKNSLIVIIFIWLLASLIGGPALYFRDTVEFNNHTLCYNNFQKHDPDLTVIRHHVLTWVKYIVGYLFPLLTMSICYLCLILKVKKRSILISSRHFWTILAVVVAFVVCWTPYHLFSIWELTIHHNSYSHHVMQAGIPLSTGLAFLNSCLNPILYVLISKKFQARFRSSVAEILKYTLWEVSCSGTVSEQLRNSETKNLCLLETAQ.

At 1–41 (MEDLEETLFEEFENYSYALDYYSLESDLEEKVQLGVVHWVS) the chain is on the extracellular side. Residue N14 is glycosylated (N-linked (GlcNAc...) asparagine). The chain crosses the membrane as a helical span at residues 42–62 (LVLYCLSFVLGIPGNAIVIWF). Residues 63–73 (TGFKWKRTVST) are Cytoplasmic-facing. The chain crosses the membrane as a helical span at residues 74 to 94 (LWFLNLAIADFIFLLFLPLYI). At 95–112 (SYVVMNFHWPFGIWLCKA) the chain is on the extracellular side. C110 and C187 form a disulfide bridge. The helical transmembrane segment at 113–133 (NSFTAQLNMFASVFFLTVISL) threads the bilayer. At 134–154 (DHYIHLIHPVLSHRHRTLKNS) the chain is on the cytoplasmic side. The helical transmembrane segment at 155–175 (LIVIIFIWLLASLIGGPALYF) threads the bilayer. The Extracellular portion of the chain corresponds to 176 to 210 (RDTVEFNNHTLCYNNFQKHDPDLTVIRHHVLTWVK). A helical transmembrane segment spans residues 211–231 (YIVGYLFPLLTMSICYLCLIL). Topologically, residues 232–247 (KVKKRSILISSRHFWT) are cytoplasmic. Residues 248–268 (ILAVVVAFVVCWTPYHLFSIW) form a helical membrane-spanning segment. Topologically, residues 269-286 (ELTIHHNSYSHHVMQAGI) are extracellular. The chain crosses the membrane as a helical span at residues 287 to 307 (PLSTGLAFLNSCLNPILYVLI). Residues 308 to 355 (SKKFQARFRSSVAEILKYTLWEVSCSGTVSEQLRNSETKNLCLLETAQ) are Cytoplasmic-facing.

The protein belongs to the chemokine-like receptor (CMKLR) family.

It localises to the cell membrane. Its function is as follows. Receptor for chemoattractant adipokine chemerin/RARRES2 suggesting a role for this receptor in the regulation of inflammation and energy homesotasis. Signals mainly via beta-arrestin pathway. Binding of RARRES2 activates weakly G proteins, calcium mobilization and MAPK1/MAPK3 (ERK1/2) phosphorylation too. Acts also as a receptor for TAFA1, mediates its effects on neuronal stem-cell proliferation and differentiation via the activation of ROCK/ERK and ROCK/STAT3 signaling pathway. In Macaca fascicularis (Crab-eating macaque), this protein is Chemerin-like receptor 2 (CMKLR2).